A 173-amino-acid chain; its full sequence is Protein-export protein SecB (173 aa).

Residues 148 to 173 (QQQKQRREQGTSDSAPSGSPDNGGRQ) are disordered. The segment covering 158 to 167 (TSDSAPSGSP) has biased composition (polar residues).

It belongs to the SecB family. In terms of assembly, homotetramer, a dimer of dimers. One homotetramer interacts with 1 SecA dimer.

The protein localises to the cytoplasm. Functionally, one of the proteins required for the normal export of preproteins out of the cell cytoplasm. It is a molecular chaperone that binds to a subset of precursor proteins, maintaining them in a translocation-competent state. It also specifically binds to its receptor SecA. The protein is Protein-export protein SecB of Halorhodospira halophila (strain DSM 244 / SL1) (Ectothiorhodospira halophila (strain DSM 244 / SL1)).